We begin with the raw amino-acid sequence, 721 residues long: Polyribonucleotide nucleotidyltransferase (721 aa).

Mg(2+) contacts are provided by Asp495 and Asp501. In terms of domain architecture, KH spans 562–621 (PRITTIKIRPERIKDIIGPGGKTIKDITARTGTSINIEDDGSVSIASPNQDKVEEAIKMI). The region spanning 631–699 (GRIYMGTVRK…RSGKIRLSRK (69 aa)) is the S1 motif domain. Residues 699-721 (KEALADSAKKSEGTEPPKGEPAK) form a disordered region.

Belongs to the polyribonucleotide nucleotidyltransferase family. It depends on Mg(2+) as a cofactor.

Its subcellular location is the cytoplasm. The catalysed reaction is RNA(n+1) + phosphate = RNA(n) + a ribonucleoside 5'-diphosphate. Its function is as follows. Involved in mRNA degradation. Catalyzes the phosphorolysis of single-stranded polyribonucleotides processively in the 3'- to 5'-direction. In Anaeromyxobacter dehalogenans (strain 2CP-C), this protein is Polyribonucleotide nucleotidyltransferase.